A 255-amino-acid chain; its full sequence is tRNA (guanine-N(7)-)-methyltransferase (255 aa).

A disordered region spans residues 1-21; it reads MMHDDPNEAGLPPHDDAIPDE. The S-adenosyl-L-methionine site is built by E86, E111, D138, and D161. Residue D161 is part of the active site. Residues K165, D197, and 232 to 235 each bind substrate; that span reads TKFE.

The protein belongs to the class I-like SAM-binding methyltransferase superfamily. TrmB family.

It catalyses the reaction guanosine(46) in tRNA + S-adenosyl-L-methionine = N(7)-methylguanosine(46) in tRNA + S-adenosyl-L-homocysteine. The protein operates within tRNA modification; N(7)-methylguanine-tRNA biosynthesis. Functionally, catalyzes the formation of N(7)-methylguanine at position 46 (m7G46) in tRNA. This chain is tRNA (guanine-N(7)-)-methyltransferase, found in Burkholderia lata (strain ATCC 17760 / DSM 23089 / LMG 22485 / NCIMB 9086 / R18194 / 383).